Reading from the N-terminus, the 61-residue chain is Small ribosomal subunit protein uS14 (61 aa).

Zn(2+) is bound by residues C24, C27, C40, and C43.

It belongs to the universal ribosomal protein uS14 family. Zinc-binding uS14 subfamily. In terms of assembly, part of the 30S ribosomal subunit. Contacts proteins S3 and S10. Requires Zn(2+) as cofactor.

Its function is as follows. Binds 16S rRNA, required for the assembly of 30S particles and may also be responsible for determining the conformation of the 16S rRNA at the A site. This Heliobacterium modesticaldum (strain ATCC 51547 / Ice1) protein is Small ribosomal subunit protein uS14.